A 614-amino-acid polypeptide reads, in one-letter code: Dihydroxy-acid dehydratase (614 aa).

D81 contacts Mg(2+). A [2Fe-2S] cluster-binding site is contributed by C122. Positions 123 and 124 each coordinate Mg(2+). K124 is subject to N6-carboxylysine. Residue C196 participates in [2Fe-2S] cluster binding. Residue E492 participates in Mg(2+) binding. S518 serves as the catalytic Proton acceptor.

The protein belongs to the IlvD/Edd family. As to quaternary structure, homodimer. It depends on [2Fe-2S] cluster as a cofactor. Mg(2+) serves as cofactor.

The catalysed reaction is (2R)-2,3-dihydroxy-3-methylbutanoate = 3-methyl-2-oxobutanoate + H2O. It catalyses the reaction (2R,3R)-2,3-dihydroxy-3-methylpentanoate = (S)-3-methyl-2-oxopentanoate + H2O. Its pathway is amino-acid biosynthesis; L-isoleucine biosynthesis; L-isoleucine from 2-oxobutanoate: step 3/4. The protein operates within amino-acid biosynthesis; L-valine biosynthesis; L-valine from pyruvate: step 3/4. Its function is as follows. Functions in the biosynthesis of branched-chain amino acids. Catalyzes the dehydration of (2R,3R)-2,3-dihydroxy-3-methylpentanoate (2,3-dihydroxy-3-methylvalerate) into 2-oxo-3-methylpentanoate (2-oxo-3-methylvalerate) and of (2R)-2,3-dihydroxy-3-methylbutanoate (2,3-dihydroxyisovalerate) into 2-oxo-3-methylbutanoate (2-oxoisovalerate), the penultimate precursor to L-isoleucine and L-valine, respectively. In Ruegeria sp. (strain TM1040) (Silicibacter sp.), this protein is Dihydroxy-acid dehydratase.